We begin with the raw amino-acid sequence, 247 residues long: MEPALISPELLDGSSLLPHSSADESSSTGLSLGSLLSSSNDLSSETSMPQFEQLERMLGSPTIANHVDFTTQSTDLGFLSDPNITLSSIELTELFSIPSDNASLMPEPSRQPSPLKAPDLQTTPPATGLIDSEANPTSVPLGNSVEQSADVKQLRKKYHEKYKERNRVAAGKSRQKQVDLIELLQAEQREEERRRKALERELSQIHKELLDLKQELQHHIRIANCMTMMSHGAHMQTLGLLAQDMLR.

Disordered stretches follow at residues 1-48 and 100-143; these read MEPA…ETSM and DNAS…PLGN. Over residues 23 to 47 the composition is skewed to low complexity; that stretch reads DESSSTGLSLGSLLSSSNDLSSETS. Positions 134–143 are enriched in polar residues; the sequence is ANPTSVPLGN. A basic motif region spans residues 156–196; sequence KKYHEKYKERNRVAAGKSRQKQVDLIELLQAEQREEERRRK. A bZIP domain is found at 156 to 219; the sequence is KKYHEKYKER…LDLKQELQHH (64 aa). The tract at residues 198 to 212 is leucine-zipper; sequence LERELSQIHKELLDL.

It is found in the nucleus. Functionally, transcription factor; part of the gene cluster that mediates the biosynthesis of ochratoxin A (OTA), a mycotoxin demonstrated to have nephrotoxic, immunotoxic, genotoxic, neurotoxic, and teratogenic properties. Positively regulates the expression of the cluster genes otaA, otaB, otaC and otaD, and the subsequent production of OTA. The chain is Transcription factor otaR1 from Aspergillus carbonarius (strain ITEM 5010).